We begin with the raw amino-acid sequence, 264 residues long: Tritrans,polycis-undecaprenyl-diphosphate synthase (geranylgeranyl-diphosphate specific) (264 aa).

D43 is a catalytic residue. D43 serves as a coordination point for Mg(2+). Substrate is bound by residues 44 to 47 (GNRR), W48, H60, and 88 to 90 (STE). N91 acts as the Proton acceptor in catalysis. Substrate contacts are provided by residues F92, R94, R213, and 219–221 (RIS). E232 lines the Mg(2+) pocket.

It belongs to the UPP synthase family. As to quaternary structure, homodimer. Mg(2+) is required as a cofactor.

It carries out the reaction geranylgeranyl diphosphate + 7 isopentenyl diphosphate = tri-trans,hepta-cis-undecaprenyl diphosphate + 7 diphosphate. Its function is as follows. Catalyzes the sequential condensation of isopentenyl diphosphate (IPP) with geranylgeranyl diphosphate (GGPP) to yield (2Z,6Z,10Z,14Z,18Z,22Z,26Z,30E,34E,38E)-undecaprenyl diphosphate (tritrans,heptacis-UPP). It is probably the precursor of glycosyl carrier lipids. This chain is Tritrans,polycis-undecaprenyl-diphosphate synthase (geranylgeranyl-diphosphate specific), found in Pyrococcus horikoshii (strain ATCC 700860 / DSM 12428 / JCM 9974 / NBRC 100139 / OT-3).